We begin with the raw amino-acid sequence, 189 residues long: Vacuolar iron transporter homolog 2 (189 aa).

Residues 1-10 (MARAQWLRAA) are Cytoplasmic-facing. The chain crosses the membrane as a helical span at residues 11–31 (VLGANDGLVSVASLMIGIGAV). At 32–38 (NENNKAM) the chain is on the vacuolar side. Residues 39-59 (LVSGLAGLVAGACSMAIGEFV) traverse the membrane as a helical segment. The Cytoplasmic segment spans residues 60 to 97 (SVYAQYDIEVTQIERDGDIDGADAAAAREKLPSPTQAA). A helical membrane pass occupies residues 98–118 (FASALAFAIGGLLPLLTSGFI). Residues 119-124 (KPWGPR) are Vacuolar-facing. The helical transmembrane segment at 125-145 (VGVVCAASSVGLAGFGAAGGY) threads the bilayer. Over 146 to 159 (LGGANMVRSGTRVL) the chain is Cytoplasmic. A helical transmembrane segment spans residues 160–180 (LGGWLAMLITYAVLRLFATIF). Over 181–189 (HGMNISSSA) the chain is Vacuolar.

Belongs to the CCC1 family.

It is found in the vacuole membrane. The catalysed reaction is Fe(2+)(in) = Fe(2+)(out). Probable vacuolar iron transporter that may be involved in the regulation of iron distribution throughout the plant. The polypeptide is Vacuolar iron transporter homolog 2 (Oryza sativa subsp. japonica (Rice)).